An 80-amino-acid chain; its full sequence is Conotoxin Lt6.2 (80 aa).

Residues 1-24 form the signal peptide; the sequence is MKLTRVLIIAVLFLTAYQLTTVET. Residues 25-47 constitute a propeptide that is removed on maturation; it reads YSRGKWMHRALRSTGKNPKVTRE. 3 disulfides stabilise this stretch: Cys-48–Cys-62, Cys-55–Cys-66, and Cys-61–Cys-73.

It belongs to the conotoxin O1 superfamily. In terms of tissue distribution, expressed by the venom duct.

Its subcellular location is the secreted. This chain is Conotoxin Lt6.2, found in Conus litteratus (Lettered cone).